A 77-amino-acid polypeptide reads, in one-letter code: Translation initiation factor IF-1, chloroplastic (77 aa).

Residues 1–71 (MKRQKWIHEG…TRGRIIYRLR (71 aa)) enclose the S1-like domain.

The protein belongs to the IF-1 family. As to quaternary structure, component of the 30S ribosomal translation pre-initiation complex which assembles on the 30S ribosome in the order IF-2 and IF-3, IF-1 and N-formylmethionyl-tRNA(fMet); mRNA recruitment can occur at any time during PIC assembly.

Its subcellular location is the plastid. It localises to the chloroplast. In terms of biological role, one of the essential components for the initiation of protein synthesis. Stabilizes the binding of IF-2 and IF-3 on the 30S subunit to which N-formylmethionyl-tRNA(fMet) subsequently binds. Helps modulate mRNA selection, yielding the 30S pre-initiation complex (PIC). Upon addition of the 50S ribosomal subunit IF-1, IF-2 and IF-3 are released leaving the mature 70S translation initiation complex. The chain is Translation initiation factor IF-1, chloroplastic from Leucophyllum frutescens (Texas ranger).